We begin with the raw amino-acid sequence, 161 residues long: uncharacterized protein (161 aa).

This is an uncharacterized protein from Saccharomyces cerevisiae (strain ATCC 204508 / S288c) (Baker's yeast).